The primary structure comprises 177 residues: Novel acetylcholine receptor chaperone (177 aa).

Residues 1–5 (MASPR) lie on the Cytoplasmic side of the membrane. A helical transmembrane segment spans residues 6–26 (TVTVVALSVALGLFFVFMGTI). Residues 27–61 (KLTPRLSKDAYSEMKRAYKSYVRALPLLKKMGINS) lie on the Lumenal side of the membrane. Residues 43-54 (AYKSYVRALPLL) are interaction with NGFR. The helical transmembrane segment at 62-82 (ILLRKSIGALEVACGIVMTLV) threads the bilayer. Residues 83 to 88 (PGRPKD) are Cytoplasmic-facing. A helical membrane pass occupies residues 89–109 (VANFFLLLLVLAVLFFHQLVG). Topologically, residues 110–114 (DPLKR) are lumenal. A helical transmembrane segment spans residues 115–132 (YAHALVFGILLTCRLLIA). Over 133–177 (RKPEDRSSEKKSSPPGNAGSDGNAGNTEEQPSLYEKAPQGKMKLS) the chain is Cytoplasmic. Positions 136–177 (EDRSSEKKSSPPGNAGSDGNAGNTEEQPSLYEKAPQGKMKLS) are disordered.

Belongs to the DoxX family. In terms of assembly, may interact with NGFR. Interacts with RPN1, RPN2 and CANX.

The protein resides in the peroxisome membrane. The protein localises to the cytoplasmic vesicle. It localises to the endoplasmic reticulum membrane. Functionally, molecular chaperone which mediates the proper assembly and functional expression of the nicotinic acetylcholine receptors (nAChRs) throughout the brain. Essential for the proper folding, assembly, function and surface trafficking of alpha-7 (CHRNA7), alpha-4-beta-2, alpha-3-beta-2 and alpha-3-beta-4 receptors. Stably associates with ribophorin-1 (RPN1) and ribophorin-2 (RPN2) (components of the oligosaccharyl transferase (OST) complex) and with calnexin (CANX), both of which are critical for NACHO-mediated effects on CHRNA7 assembly and function. Facilitates the proper folding and assembly of alpha-6-beta-2 and alpha-6-beta-2-beta-3 receptors and acts at early stages of the nAChRs subunit assembly. Promotes the expression of the alpha-4(2):beta-2(3) stoichiometric form over the alpha-4(3):beta-2(2) form. This chain is Novel acetylcholine receptor chaperone (TMEM35A), found in Bos taurus (Bovine).